The sequence spans 340 residues: Ketol-acid reductoisomerase (NADP(+)) (340 aa).

The region spanning 3-182 (VTMYYEDDVE…GCARVGIIET (180 aa)) is the KARI N-terminal Rossmann domain. Residues 26–29 (YGSQ), Arg-49, Ser-53, and 83–86 (DELQ) contribute to the NADP(+) site. The active site involves His-108. Gly-134 is a binding site for NADP(+). The 146-residue stretch at 183–328 (TFKEETEEDL…AELRKAMPFT (146 aa)) folds into the KARI C-terminal knotted domain. Positions 191, 195, 227, and 231 each coordinate Mg(2+). A substrate-binding site is contributed by Ser-252.

Belongs to the ketol-acid reductoisomerase family. Requires Mg(2+) as cofactor.

It catalyses the reaction (2R)-2,3-dihydroxy-3-methylbutanoate + NADP(+) = (2S)-2-acetolactate + NADPH + H(+). It carries out the reaction (2R,3R)-2,3-dihydroxy-3-methylpentanoate + NADP(+) = (S)-2-ethyl-2-hydroxy-3-oxobutanoate + NADPH + H(+). It functions in the pathway amino-acid biosynthesis; L-isoleucine biosynthesis; L-isoleucine from 2-oxobutanoate: step 2/4. The protein operates within amino-acid biosynthesis; L-valine biosynthesis; L-valine from pyruvate: step 2/4. In terms of biological role, involved in the biosynthesis of branched-chain amino acids (BCAA). Catalyzes an alkyl-migration followed by a ketol-acid reduction of (S)-2-acetolactate (S2AL) to yield (R)-2,3-dihydroxy-isovalerate. In the isomerase reaction, S2AL is rearranged via a Mg-dependent methyl migration to produce 3-hydroxy-3-methyl-2-ketobutyrate (HMKB). In the reductase reaction, this 2-ketoacid undergoes a metal-dependent reduction by NADPH to yield (R)-2,3-dihydroxy-isovalerate. This is Ketol-acid reductoisomerase (NADP(+)) from Lactococcus lactis subsp. lactis (strain IL1403) (Streptococcus lactis).